We begin with the raw amino-acid sequence, 483 residues long: AP-3 complex subunit mu (483 aa).

The MHD domain occupies 211 to 482; it reads NNELYVDLLE…KTQTGNFQVR (272 aa).

This sequence belongs to the adaptor complexes medium subunit family. Adaptor protein complex 3 (AP-3) is a heterotetramer composed of 2 large adaptins (APL5 and APL6), a medium adaptin (APM3) and a small adaptin (APS3).

The protein localises to the golgi apparatus. Its subcellular location is the cytoplasmic vesicle membrane. In terms of biological role, part of the AP-3 complex, an adaptor-related complex which is not clathrin-associated. The complex is associated with the Golgi region as well as more peripheral structures. It facilitates the budding of vesicles from the Golgi membrane and may be directly involved in trafficking to the vacuole. Required for the transport via the ALP pathway, which directs the transport of the cargo proteins PHO8 and VAM3 to the vacuole. The protein is AP-3 complex subunit mu (APM3) of Saccharomyces cerevisiae (strain ATCC 204508 / S288c) (Baker's yeast).